Consider the following 156-residue polypeptide: Protein US1 (156 aa).

2 disordered regions span residues 90–114 and 133–156; these read RSRSRTAESGRSSSSSSVSVLSDGD and ARRWTQRHDSEERASQQAKNDSTS. The span at 96 to 111 shows a compositional bias: low complexity; it reads AESGRSSSSSSVSVLS. Residues 147–156 show a composition bias toward polar residues; it reads SQQAKNDSTS.

This is Protein US1 (US1) from Homo sapiens (Human).